The following is a 567-amino-acid chain: Urease subunit alpha (567 aa).

Residues H134, H136, and K217 each contribute to the Ni(2+) site. Residue K217 is modified to N6-carboxylysine. Residue H219 coordinates substrate. Ni(2+)-binding residues include H246 and H272. Residue H320 is the Proton donor of the active site. D360 contacts Ni(2+).

The protein belongs to the metallo-dependent hydrolases superfamily. Urease alpha subunit family. In terms of assembly, heterotrimer of UreA (gamma), UreB (beta) and UreC (alpha) subunits. Three heterotrimers associate to form the active enzyme. The cofactor is Ni cation. In terms of processing, carboxylation allows a single lysine to coordinate two nickel ions.

It is found in the cytoplasm. It carries out the reaction urea + 2 H2O + H(+) = hydrogencarbonate + 2 NH4(+). It functions in the pathway nitrogen metabolism; urea degradation; CO(2) and NH(3) from urea (urease route): step 1/1. The sequence is that of Urease subunit alpha from Pseudomonas putida (strain GB-1).